We begin with the raw amino-acid sequence, 360 residues long: Tyrosine-protein phosphatase non-receptor type 7 (360 aa).

Positions 1-37 are disordered; it reads MVQAHGGRSRAQPLTLSLGAAMTQPPPEKTPAKKHVR. The interval 38–51 is interaction with MAP kinases; sequence LQERRGSNVALMLD. A Phosphoserine modification is found at Ser-44. Thr-66 carries the post-translational modification Phosphothreonine. Ser-93, Ser-110, and Ser-143 each carry phosphoserine. One can recognise a Tyrosine-protein phosphatase domain in the interval 97-350; it reads LEEEFLKIPS…QFLHHTLALY (254 aa). Residues Asp-257, 291 to 297, and Gln-335 each bind substrate; that span reads CSAGIGR. Cys-291 serves as the catalytic Phosphocysteine intermediate. Cysteine sulfenic acid (-SOH) is present on Cys-291.

It belongs to the protein-tyrosine phosphatase family. Non-receptor class subfamily. In terms of assembly, monomer. Interacts with MAPK1, MAPK3 and several other MAP kinases. Phosphorylated on serine residues in resting T-cells. Phosphorylation increases upon exposure to stimuli that increase intracellular cAMP levels. Phosphorylation leads to dissociation of bound MAP kinases. Post-translationally, oxidized at active site cysteine. Treatment with pervanadate (vanadate and H(2)O(2)) or with antigen enhanced oxidation of active site cysteine. As to expression, expressed exclusively in thymus and spleen.

The protein resides in the cytoplasm. The protein localises to the cytoskeleton. It carries out the reaction O-phospho-L-tyrosyl-[protein] + H2O = L-tyrosyl-[protein] + phosphate. With respect to regulation, inhibited in cells after FCER1A triggering. Protein phosphatase that acts preferentially on tyrosine-phosphorylated MAPK1. Plays a role in the regulation of T and B-lymphocyte development and signal transduction. The sequence is that of Tyrosine-protein phosphatase non-receptor type 7 (PTPN7) from Homo sapiens (Human).